A 382-amino-acid polypeptide reads, in one-letter code: Dual-specificity RNA methyltransferase RlmN (382 aa).

Glu-91 acts as the Proton acceptor in catalysis. Residues 97–339 form the Radical SAM core domain; it reads EEDRGTLCIS…TTIRKTRGDD (243 aa). Cys-104 and Cys-344 are disulfide-bonded. [4Fe-4S] cluster-binding residues include Cys-111, Cys-115, and Cys-118. S-adenosyl-L-methionine-binding positions include 165–166, Ser-197, 219–221, and Asn-301; these read GE and SLH. Cys-344 (S-methylcysteine intermediate) is an active-site residue.

This sequence belongs to the radical SAM superfamily. RlmN family. [4Fe-4S] cluster serves as cofactor.

The protein localises to the cytoplasm. It carries out the reaction adenosine(2503) in 23S rRNA + 2 reduced [2Fe-2S]-[ferredoxin] + 2 S-adenosyl-L-methionine = 2-methyladenosine(2503) in 23S rRNA + 5'-deoxyadenosine + L-methionine + 2 oxidized [2Fe-2S]-[ferredoxin] + S-adenosyl-L-homocysteine. It catalyses the reaction adenosine(37) in tRNA + 2 reduced [2Fe-2S]-[ferredoxin] + 2 S-adenosyl-L-methionine = 2-methyladenosine(37) in tRNA + 5'-deoxyadenosine + L-methionine + 2 oxidized [2Fe-2S]-[ferredoxin] + S-adenosyl-L-homocysteine. Functionally, specifically methylates position 2 of adenine 2503 in 23S rRNA and position 2 of adenine 37 in tRNAs. m2A2503 modification seems to play a crucial role in the proofreading step occurring at the peptidyl transferase center and thus would serve to optimize ribosomal fidelity. The chain is Dual-specificity RNA methyltransferase RlmN from Albidiferax ferrireducens (strain ATCC BAA-621 / DSM 15236 / T118) (Rhodoferax ferrireducens).